Consider the following 224-residue polypeptide: LexA repressor (224 aa).

The H-T-H motif DNA-binding region spans M41–N61. Catalysis depends on for autocatalytic cleavage activity residues S148 and K185.

It belongs to the peptidase S24 family. Homodimer.

The catalysed reaction is Hydrolysis of Ala-|-Gly bond in repressor LexA.. Represses a number of genes involved in the response to DNA damage (SOS response), including recA and lexA. In the presence of single-stranded DNA, RecA interacts with LexA causing an autocatalytic cleavage which disrupts the DNA-binding part of LexA, leading to derepression of the SOS regulon and eventually DNA repair. The sequence is that of LexA repressor from Leifsonia xyli subsp. xyli (strain CTCB07).